The sequence spans 232 residues: Ubiquinone biosynthesis O-methyltransferase (232 aa).

S-adenosyl-L-methionine contacts are provided by Arg36, Gly55, Asp76, and Leu120.

Belongs to the methyltransferase superfamily. UbiG/COQ3 family.

The catalysed reaction is a 3-demethylubiquinol + S-adenosyl-L-methionine = a ubiquinol + S-adenosyl-L-homocysteine + H(+). The enzyme catalyses a 3-(all-trans-polyprenyl)benzene-1,2-diol + S-adenosyl-L-methionine = a 2-methoxy-6-(all-trans-polyprenyl)phenol + S-adenosyl-L-homocysteine + H(+). It functions in the pathway cofactor biosynthesis; ubiquinone biosynthesis. Functionally, O-methyltransferase that catalyzes the 2 O-methylation steps in the ubiquinone biosynthetic pathway. The chain is Ubiquinone biosynthesis O-methyltransferase from Pseudomonas fluorescens (strain SBW25).